The sequence spans 334 residues: Glyceraldehyde-3-phosphate dehydrogenase (334 aa).

NAD(+) is bound by residues 11 to 12, Asp-33, and Ser-119; that span reads RI. D-glyceraldehyde 3-phosphate contacts are provided by residues 149–151 and Thr-180; that span reads SCT. Catalysis depends on Cys-150, which acts as the Nucleophile. Residue Asn-181 participates in NAD(+) binding. D-glyceraldehyde 3-phosphate contacts are provided by residues Arg-197, 210-211, and Arg-233; that span reads TG. Asn-314 provides a ligand contact to NAD(+).

The protein belongs to the glyceraldehyde-3-phosphate dehydrogenase family. As to quaternary structure, homotetramer.

It localises to the cytoplasm. It catalyses the reaction D-glyceraldehyde 3-phosphate + phosphate + NAD(+) = (2R)-3-phospho-glyceroyl phosphate + NADH + H(+). It functions in the pathway carbohydrate degradation; glycolysis; pyruvate from D-glyceraldehyde 3-phosphate: step 1/5. Functionally, catalyzes the oxidative phosphorylation of glyceraldehyde 3-phosphate (G3P) to 1,3-bisphosphoglycerate (BPG) using the cofactor NAD. The first reaction step involves the formation of a hemiacetal intermediate between G3P and a cysteine residue, and this hemiacetal intermediate is then oxidized to a thioester, with concomitant reduction of NAD to NADH. The reduced NADH is then exchanged with the second NAD, and the thioester is attacked by a nucleophilic inorganic phosphate to produce BPG. The protein is Glyceraldehyde-3-phosphate dehydrogenase (gap) of Clostridium pasteurianum.